A 337-amino-acid chain; its full sequence is Regulator of RpoS (337 aa).

The 115-residue stretch at 9–123 (QILIVEDEQV…NRLREMVFAC (115 aa)) folds into the Response regulatory domain. D58 carries the post-translational modification 4-aspartylphosphate.

Belongs to the RssB family. In terms of assembly, binds to RpoS. Post-translationally, phosphorylated. Phosphorylation stimulates the interaction with RpoS and, therefore, the proteolysis of RpoS.

Regulates the turnover of the sigma S factor (RpoS) by promoting its proteolysis in exponentially growing cells. Acts by binding and delivering RpoS to the ClpXP protease. RssB is not co-degraded with RpoS, but is released from the complex and can initiate a new cycle of RpoS recognition and degradation. This chain is Regulator of RpoS, found in Shigella flexneri.